The sequence spans 416 residues: 4-hydroxy-3-methylbut-2-en-1-yl diphosphate synthase (flavodoxin) (416 aa).

4 residues coordinate [4Fe-4S] cluster: Cys304, Cys307, Cys350, and Glu357.

Belongs to the IspG family. [4Fe-4S] cluster is required as a cofactor.

It catalyses the reaction (2E)-4-hydroxy-3-methylbut-2-enyl diphosphate + oxidized [flavodoxin] + H2O + 2 H(+) = 2-C-methyl-D-erythritol 2,4-cyclic diphosphate + reduced [flavodoxin]. It functions in the pathway isoprenoid biosynthesis; isopentenyl diphosphate biosynthesis via DXP pathway; isopentenyl diphosphate from 1-deoxy-D-xylulose 5-phosphate: step 5/6. Its function is as follows. Converts 2C-methyl-D-erythritol 2,4-cyclodiphosphate (ME-2,4cPP) into 1-hydroxy-2-methyl-2-(E)-butenyl 4-diphosphate. The protein is 4-hydroxy-3-methylbut-2-en-1-yl diphosphate synthase (flavodoxin) of Rhizobium etli (strain ATCC 51251 / DSM 11541 / JCM 21823 / NBRC 15573 / CFN 42).